A 123-amino-acid chain; its full sequence is Large ribosomal subunit protein uL14 (123 aa).

It belongs to the universal ribosomal protein uL14 family. As to quaternary structure, part of the 50S ribosomal subunit. Forms a cluster with proteins L3 and L19. In the 70S ribosome, L14 and L19 interact and together make contacts with the 16S rRNA in bridges B5 and B8.

Binds to 23S rRNA. Forms part of two intersubunit bridges in the 70S ribosome. This chain is Large ribosomal subunit protein uL14, found in Vibrio vulnificus (strain CMCP6).